The following is a 237-amino-acid chain: Necrosis-inducing protein NPP1 (237 aa).

A signal peptide spans 1–19 (MNVLTFLIAAAVSLAVVQA). The N-linked (GlcNAc...) asparagine glycan is linked to Asn-67. The Conserved undecapeptide motif motif lies at 103 to 113 (AIMYSWYFPKD). The Conserved heptapetpide motif signature appears at 120–126 (GHRHDWE).

The protein belongs to the Necrosis inducing protein (NPP1) family.

It localises to the secreted. Its function is as follows. Secreted effector that acts as a pathogen-associated molecular pattern (PAMP) recognized by the plant immune system. Induces necrotic cell death and ethylene biosynthesis in parsley. Stimulates early induced host cellular responses implicated in elicitor signal transmission such as increased levels of cytoplasmic calcium, production of reactive oxygen species (ROS), and MAP kinase activation. Infiltration of NPP1 into leaves of Arabidopsis thaliana results in transcript accumulation of pathogenesis-related (PR) genes, production of ROS and ethylene, callose apposition, and hypersensitive response (HR)-like cell death. NPP1-mediated induction of the PR1 gene is salicylic acid-dependent, and requires both functional NDR1 and PAD4. In Phytophthora nicotianae (Potato buckeye rot agent), this protein is Necrosis-inducing protein NPP1.